The primary structure comprises 578 residues: Ribonuclease SLFN12 (578 aa).

Serine 368 carries the phosphoserine modification. The mediates interaction with PDE3A stretch occupies residues 551–560 (AENLYQIIGI). Residue serine 573 is modified to Phosphoserine.

It belongs to the Schlafen family. Subgroup II subfamily. Homodimer. Interacts with PDE3A; direct low affinity interaction which is stimulated by binding of 17beta-estradiol/E2 to PDE3A and that positively regulates the ribonuclease activity of SLFN12. Interacts with SERPINB12; as part of a pathway regulating cell differentiation. Post-translationally, phosphorylation at Ser-368 and Ser-573 negatively regulates the ribonuclease activity. Dephosphorylation is induced by the interaction with PDE3A and stimulates the rRNA ribonuclease activity.

Its subcellular location is the nucleus. It is found in the cytoplasm. The protein resides in the cytosol. Ribonuclease which is part of an E2/17beta-estradiol-induced pro-apoptotic signaling pathway. E2 stabilizes the PDE3A/SLFN12 complex in the cytosol, promoting the dephosphorylation of SLFN12 and activating its pro-apoptotic ribosomal RNA/rRNA ribonuclease activity. This apoptotic pathway might be relevant in tissues with high concentration of E2 and be for instance involved in placenta remodeling. May play a role in cell differentiation. The polypeptide is Ribonuclease SLFN12 (Homo sapiens (Human)).